An 833-amino-acid chain; its full sequence is Lon protease (833 aa).

One can recognise a Lon N-terminal domain in the interval 3–198 (YPFMATRGVI…LIFSFLVELK (196 aa)). 390–397 (GPPGTGKT) lines the ATP pocket. Residues 627–808 (YERIGAVNGL…DEIFENLFGK (182 aa)) form the Lon proteolytic domain. Catalysis depends on residues Ser714 and Lys757.

This sequence belongs to the peptidase S16 family. Homohexamer. Organized in a ring with a central cavity.

The protein localises to the cytoplasm. The catalysed reaction is Hydrolysis of proteins in presence of ATP.. In terms of biological role, ATP-dependent serine protease that mediates the selective degradation of mutant and abnormal proteins as well as certain short-lived regulatory proteins. Required for cellular homeostasis and for survival from DNA damage and developmental changes induced by stress. Degrades polypeptides processively to yield small peptide fragments that are 5 to 10 amino acids long. Binds to DNA in a double-stranded, site-specific manner. In Mycoplasma mobile (strain ATCC 43663 / 163K / NCTC 11711) (Mesomycoplasma mobile), this protein is Lon protease.